Here is a 750-residue protein sequence, read N- to C-terminus: Photosystem I P700 chlorophyll a apoprotein A1 (750 aa).

Helical transmembrane passes span 70 to 93 (VFSA…FHGA), 156 to 179 (LYCT…FHYH), 195 to 219 (LNHH…HVSL), 291 to 309 (IAHH…GHMY), 346 to 369 (WHAQ…HHMY), 385 to 411 (LSLF…IFMV), 433 to 455 (AIIS…LYIH), and 531 to 549 (FLVH…LILL). 2 residues coordinate [4Fe-4S] cluster: C573 and C582. The next 2 helical transmembrane spans lie at 589 to 610 (HVFL…HFSW) and 664 to 686 (LSAY…MFLF). Residue H675 participates in chlorophyll a' binding. Chlorophyll a-binding residues include M683 and Y691. Residue W692 participates in phylloquinone binding. Residues 724-744 (AVGVTHYLLGGIATTWAFFLA) traverse the membrane as a helical segment.

Belongs to the PsaA/PsaB family. The PsaA/B heterodimer binds the P700 chlorophyll special pair and subsequent electron acceptors. PSI consists of a core antenna complex that captures photons, and an electron transfer chain that converts photonic excitation into a charge separation. The eukaryotic PSI reaction center is composed of at least 11 subunits. P700 is a chlorophyll a/chlorophyll a' dimer, A0 is one or more chlorophyll a, A1 is one or both phylloquinones and FX is a shared 4Fe-4S iron-sulfur center. serves as cofactor.

It is found in the plastid. Its subcellular location is the chloroplast thylakoid membrane. The catalysed reaction is reduced [plastocyanin] + hnu + oxidized [2Fe-2S]-[ferredoxin] = oxidized [plastocyanin] + reduced [2Fe-2S]-[ferredoxin]. Its function is as follows. PsaA and PsaB bind P700, the primary electron donor of photosystem I (PSI), as well as the electron acceptors A0, A1 and FX. PSI is a plastocyanin-ferredoxin oxidoreductase, converting photonic excitation into a charge separation, which transfers an electron from the donor P700 chlorophyll pair to the spectroscopically characterized acceptors A0, A1, FX, FA and FB in turn. Oxidized P700 is reduced on the lumenal side of the thylakoid membrane by plastocyanin. This chain is Photosystem I P700 chlorophyll a apoprotein A1, found in Populus trichocarpa (Western balsam poplar).